The following is a 168-amino-acid chain: ATP synthase subunit b (168 aa).

Residues 9–29 (SIPFGTIAYTLFIFLLLLVML) form a helical membrane-spanning segment.

This sequence belongs to the ATPase B chain family. In terms of assembly, F-type ATPases have 2 components, F(1) - the catalytic core - and F(0) - the membrane proton channel. F(1) has five subunits: alpha(3), beta(3), gamma(1), delta(1), epsilon(1). F(0) has three main subunits: a(1), b(2) and c(10-14). The alpha and beta chains form an alternating ring which encloses part of the gamma chain. F(1) is attached to F(0) by a central stalk formed by the gamma and epsilon chains, while a peripheral stalk is formed by the delta and b chains.

Its subcellular location is the cell membrane. Functionally, f(1)F(0) ATP synthase produces ATP from ADP in the presence of a proton or sodium gradient. F-type ATPases consist of two structural domains, F(1) containing the extramembraneous catalytic core and F(0) containing the membrane proton channel, linked together by a central stalk and a peripheral stalk. During catalysis, ATP synthesis in the catalytic domain of F(1) is coupled via a rotary mechanism of the central stalk subunits to proton translocation. Its function is as follows. Component of the F(0) channel, it forms part of the peripheral stalk, linking F(1) to F(0). The protein is ATP synthase subunit b of Bacillus cereus (strain B4264).